A 238-amino-acid polypeptide reads, in one-letter code: MKLEFSIYRYNPDVDNAPRMQDYTLEGEEGRDMMLLDALIQLKEKDPSLSFRRSCREGVCGSDGLNMNGKNGLACITPISALTQPGKKIVIRPLPGLPVIRDLVVDMGQFYAQYEKIKPYLLNNGQNPPAREHLQMPEQREKLDGLYECILCACCSTSCPSFWWNPDKFIGPAGLLAAYRFLIDSRDTETDSRLEGMSDAFSVFRCHSIMNCVSVCPKGLNPTRAIGHIKSMLLQRSA.

Positions 1 to 97 (MKLEFSIYRY…KIVIRPLPGL (97 aa)) constitute a 2Fe-2S ferredoxin-type domain. Residues Cys55, Cys60, and Cys75 each contribute to the [2Fe-2S] cluster site. The 4Fe-4S ferredoxin-type domain occupies 139–169 (QREKLDGLYECILCACCSTSCPSFWWNPDKF). Residues Cys149, Cys152, and Cys155 each coordinate [4Fe-4S] cluster. Cys159 is a binding site for [3Fe-4S] cluster. Trp164 is an a ubiquinone binding site. Residues Cys206 and Cys212 each coordinate [3Fe-4S] cluster. Cys216 contacts [4Fe-4S] cluster.

The protein belongs to the succinate dehydrogenase/fumarate reductase iron-sulfur protein family. Part of an enzyme complex containing four subunits: a flavoprotein, an iron-sulfur, cytochrome b-556, and a hydrophobic anchor protein. Requires [2Fe-2S] cluster as cofactor. It depends on [3Fe-4S] cluster as a cofactor. [4Fe-4S] cluster serves as cofactor.

The enzyme catalyses a quinone + succinate = fumarate + a quinol. The protein operates within carbohydrate metabolism; tricarboxylic acid cycle; fumarate from succinate (bacterial route): step 1/1. Its function is as follows. Two distinct, membrane-bound, FAD-containing enzymes are responsible for the catalysis of fumarate and succinate interconversion; the fumarate reductase is used in anaerobic growth, and the succinate dehydrogenase is used in aerobic growth. This is Succinate dehydrogenase iron-sulfur subunit (sdhB) from Salmonella typhimurium (strain LT2 / SGSC1412 / ATCC 700720).